A 511-amino-acid chain; its full sequence is RNA polymerase principal sigma factor HrdB (511 aa).

The interval 72–186 (SAAEPKRTRK…AATEEPEGTE (115 aa)) is disordered. Residues 78–93 (RTRKSVAAKSPAKRTA) show a composition bias toward basic residues. Residues 94-121 (TKAVAAKPVTSRKATAPAAPAAPATEPA) show a composition bias toward low complexity. Residues 132–158 (AAAKKTTAKKATAKKTTAKKAAAKKTT) are compositionally biased toward basic residues. The interval 211–347 (TADPVKDYLK…ITRAMADQAR (137 aa)) is binds RNA polymerase-binding protein RbpA. The sigma-70 factor domain-2 stretch occupies residues 278 to 348 (LLEANLRLVV…TRAMADQART (71 aa)). The short motif at 302–305 (DLIQ) is the Interaction with polymerase core subunit RpoC element. A sigma-70 factor domain-3 region spans residues 357-433 (EVINKLARVQ…DSEAVVPADA (77 aa)). The sigma-70 factor domain-4 stretch occupies residues 446-499 (VLDTLSEREAGVVSMRFGLTDGQPKTLDEIGKVYGVTRERIRQIESKTMSKLRH). Positions 472–491 (LDEIGKVYGVTRERIRQIES) form a DNA-binding region, H-T-H motif.

The protein belongs to the sigma-70 factor family. As to quaternary structure, homotrimer (Potential). interacts transiently with the RNA polymerase core complex. Interacts with RNA polymerase-binding protein RbpA via its sigma-2 region (residues 211-347) in a free form.

Functionally, sigma factors are initiation factors that promote the attachment of RNA polymerase to specific initiation sites and are then released. This sigma factor is the primary sigma factor during exponential growth. Its activity is stimulated by RbpA. The sequence is that of RNA polymerase principal sigma factor HrdB (hrdB) from Streptomyces coelicolor (strain ATCC BAA-471 / A3(2) / M145).